The following is a 469-amino-acid chain: Transcription factor E2FB (469 aa).

Disordered stretches follow at residues 1–28 (MSEEVPQQFPSSKRQLHPSLSSMKPPLV) and 84–118 (QTPVSGKGGKAKKTSRSAKSNKSGTLASGSNAGSP). 2 stretches are compositionally biased toward polar residues: residues 8 to 22 (QFPSSKRQLHPSLSS) and 100 to 118 (SAKSNKSGTLASGSNAGSP). The DNA-binding element occupies 129–194 (RYDSSLGLLT…TLKNRIQWKG (66 aa)). A coiled-coil region spans residues 202–246 (ETIESIANLQDEVQNLAAEEARLDDQIRESQERLTSLSEDENNKR). The segment at 210 to 238 (LQDEVQNLAAEEARLDDQIRESQERLTSL) is leucine-zipper. The segment at 319–374 (PQADEPSNVPDEPSNVPDVPSNLPSTSGLPENHDVSMPMKEESTERNMETQEVDDT) is disordered. Residues 349–374 (ENHDVSMPMKEESTERNMETQEVDDT) show a composition bias toward basic and acidic residues. Residues 403 to 419 (DYWFRSEVGEVSITDMW) are retinoblastoma protein binding. A disordered region spans residues 426–469 (DWNQMITFDQDHAGPSDNKILEQPQTPSSPTPEESTATRSPTGS). The segment covering 447-469 (EQPQTPSSPTPEESTATRSPTGS) has biased composition (low complexity).

Belongs to the E2F/DP family. In terms of assembly, heterodimer with DP proteins. Interacts (via dimerization domain) preferentially with DPA, but also with DPB. Interacts with PURA1 and retinoblastoma-related protein RBR1. Component of a DREAM-like complex which modulates a variety of developmentally regulated genes and of the mitotic genes in proliferating and differentiated cells. Interacts with MYB3R4 only at early stages of leaves development. Post-translationally, phosphorylated. As to expression, expressed in proliferating cells and several differentiated tissues. Detected in inflorescence and shoot apical meristems, cotyledonary vascular tissues, leaf primordia, young leaves, base of trichomes, central cylinder and elongation zone of roots, lateral root primordia, flowers, pistils of immature flowers and pollen grains.

It is found in the cytoplasm. It localises to the nucleus. In terms of biological role, transcription activator that binds DNA cooperatively with DP proteins through the E2 recognition site, 5'-TTTC[CG]CGC-3' found in the promoter region of a number of genes whose products are involved in cell cycle regulation or in DNA replication. The binding of retinoblastoma-related proteins represses transactivation. Involved in the control of cell-cycle progression from G1 to S phase and from G2 to M phase. Stimulates cell proliferation and delays differentiation. Represses cell enlargement and endoreduplication in auxin-free conditions. This chain is Transcription factor E2FB (E2FB), found in Arabidopsis thaliana (Mouse-ear cress).